Reading from the N-terminus, the 376-residue chain is UPF0754 membrane protein SE_1527 (376 aa).

The next 2 helical transmembrane spans lie at 4–24 (ILLVVFMIILGAIIGGVTNMI) and 356–376 (TLGFILGGIIGFFQGVIAIFV).

Belongs to the UPF0754 family.

The protein resides in the cell membrane. The polypeptide is UPF0754 membrane protein SE_1527 (Staphylococcus epidermidis (strain ATCC 12228 / FDA PCI 1200)).